A 994-amino-acid chain; its full sequence is Glycine dehydrogenase (decarboxylating), mitochondrial (994 aa).

The transit peptide at 1 to 21 (MLKLLRNNGINKLKSNLIRNY) directs the protein to the mitochondrion. N6-(pyridoxal phosphate)lysine is present on K742.

Belongs to the GcvP family. In terms of assembly, homodimer. The glycine cleavage system is composed of four proteins: P, T, L and H. It depends on pyridoxal 5'-phosphate as a cofactor.

The protein resides in the mitochondrion. It carries out the reaction N(6)-[(R)-lipoyl]-L-lysyl-[glycine-cleavage complex H protein] + glycine + H(+) = N(6)-[(R)-S(8)-aminomethyldihydrolipoyl]-L-lysyl-[glycine-cleavage complex H protein] + CO2. Its function is as follows. The glycine cleavage system catalyzes the degradation of glycine. The P protein binds the alpha-amino group of glycine through its pyridoxal phosphate cofactor; CO(2) is released and the remaining methylamine moiety is then transferred to the lipoamide cofactor of the H protein. This chain is Glycine dehydrogenase (decarboxylating), mitochondrial (gcvP), found in Dictyostelium discoideum (Social amoeba).